Reading from the N-terminus, the 880-residue chain is Alanine--tRNA ligase (880 aa).

4 residues coordinate Zn(2+): histidine 568, histidine 572, cysteine 670, and histidine 674.

It belongs to the class-II aminoacyl-tRNA synthetase family. Requires Zn(2+) as cofactor.

Its subcellular location is the cytoplasm. The catalysed reaction is tRNA(Ala) + L-alanine + ATP = L-alanyl-tRNA(Ala) + AMP + diphosphate. In terms of biological role, catalyzes the attachment of alanine to tRNA(Ala) in a two-step reaction: alanine is first activated by ATP to form Ala-AMP and then transferred to the acceptor end of tRNA(Ala). Also edits incorrectly charged Ser-tRNA(Ala) and Gly-tRNA(Ala) via its editing domain. The polypeptide is Alanine--tRNA ligase (Ligilactobacillus salivarius (strain UCC118) (Lactobacillus salivarius)).